An 88-amino-acid chain; its full sequence is Small ribosomal subunit protein bS20 (88 aa).

This sequence belongs to the bacterial ribosomal protein bS20 family.

In terms of biological role, binds directly to 16S ribosomal RNA. The chain is Small ribosomal subunit protein bS20 from Clostridium kluyveri (strain NBRC 12016).